The following is a 104-amino-acid chain: Large ribosomal subunit protein uL24 (104 aa).

Belongs to the universal ribosomal protein uL24 family. In terms of assembly, part of the 50S ribosomal subunit.

In terms of biological role, one of two assembly initiator proteins, it binds directly to the 5'-end of the 23S rRNA, where it nucleates assembly of the 50S subunit. One of the proteins that surrounds the polypeptide exit tunnel on the outside of the subunit. This is Large ribosomal subunit protein uL24 from Serratia proteamaculans (strain 568).